The chain runs to 290 residues: Short neuropeptide F (290 aa).

The signal sequence occupies residues 1–32 (MFRFNPQLSHGCALALICCLLNLLMMHQPTNA). The propeptide occupies 33 to 87 (ELSPVVQGEFFLPILPDDHPPNTDTSFGGPISNLYDNLLQREYAGPVVFPNHQVE). 2 positions are modified to phenylalanine amide: phenylalanine 100 and phenylalanine 134. Positions 138–290 (DPTLPQMRRT…IETSSIAPKN (153 aa)) are excised as a propeptide. A disordered region spans residues 238–290 (VAGYANDGDDTEAQLDEDTSEFQREARKPMRLRWGRSTGKAPQIETSSIAPKN). A compositionally biased stretch (acidic residues) spans 244–257 (DGDDTEAQLDEDTS). The segment covering 281–290 (IETSSIAPKN) has biased composition (polar residues).

It belongs to the NPY family.

It localises to the secreted. Plays a role in controlling food intake and regulating body size. In Drosophila pseudoobscura pseudoobscura (Fruit fly), this protein is Short neuropeptide F.